The chain runs to 132 residues: S-adenosylmethionine decarboxylase proenzyme (132 aa).

S65 serves as the catalytic Schiff-base intermediate with substrate; via pyruvic acid. A Pyruvic acid (Ser); by autocatalysis modification is found at S65. H70 (proton acceptor; for processing activity) is an active-site residue. Residue C85 is the Proton donor; for catalytic activity of the active site.

This sequence belongs to the prokaryotic AdoMetDC family. Type 1 subfamily. As to quaternary structure, heterotetramer of two alpha and two beta chains arranged as a dimer of alpha/beta heterodimers. Pyruvate is required as a cofactor. In terms of processing, is synthesized initially as an inactive proenzyme. Formation of the active enzyme involves a self-maturation process in which the active site pyruvoyl group is generated from an internal serine residue via an autocatalytic post-translational modification. Two non-identical subunits are generated from the proenzyme in this reaction, and the pyruvate is formed at the N-terminus of the alpha chain, which is derived from the carboxyl end of the proenzyme. The post-translation cleavage follows an unusual pathway, termed non-hydrolytic serinolysis, in which the side chain hydroxyl group of the serine supplies its oxygen atom to form the C-terminus of the beta chain, while the remainder of the serine residue undergoes an oxidative deamination to produce ammonia and the pyruvoyl group blocking the N-terminus of the alpha chain.

The enzyme catalyses S-adenosyl-L-methionine + H(+) = S-adenosyl 3-(methylsulfanyl)propylamine + CO2. It participates in amine and polyamine biosynthesis; S-adenosylmethioninamine biosynthesis; S-adenosylmethioninamine from S-adenosyl-L-methionine: step 1/1. Catalyzes the decarboxylation of S-adenosylmethionine to S-adenosylmethioninamine (dcAdoMet), the propylamine donor required for the synthesis of the polyamines spermine and spermidine from the diamine putrescine. This chain is S-adenosylmethionine decarboxylase proenzyme, found in Symbiobacterium thermophilum (strain DSM 24528 / JCM 14929 / IAM 14863 / T).